Reading from the N-terminus, the 207-residue chain is Uracil phosphoribosyltransferase (207 aa).

5-phospho-alpha-D-ribose 1-diphosphate-binding positions include Arg77, Arg102, and 129–137; that span reads DPMLATGGS. Uracil contacts are provided by residues Ile192 and 197 to 199; that span reads GDA. Residue Asp198 participates in 5-phospho-alpha-D-ribose 1-diphosphate binding.

The protein belongs to the UPRTase family. Mg(2+) serves as cofactor.

The enzyme catalyses UMP + diphosphate = 5-phospho-alpha-D-ribose 1-diphosphate + uracil. It functions in the pathway pyrimidine metabolism; UMP biosynthesis via salvage pathway; UMP from uracil: step 1/1. Allosterically activated by GTP. Functionally, catalyzes the conversion of uracil and 5-phospho-alpha-D-ribose 1-diphosphate (PRPP) to UMP and diphosphate. The polypeptide is Uracil phosphoribosyltransferase (Mycoplasma capricolum subsp. capricolum (strain California kid / ATCC 27343 / NCTC 10154)).